A 297-amino-acid polypeptide reads, in one-letter code: MKDNIVIITGITASGKSELCDNLIKKHKNISIINCDSKQVYKEIPVITAQPPKQKEFYRLYGYVSARENYSVGLWLEDLKREVNNALKNSRIPIITGGSGLYISSLIKGLSSIPQISQEVRENVNELRKNLSKEEFYKLVLSKDPRIQGKIFINDSHRLSRALEVITETGKTIFVWQENRQPPLFNNFKVYTILPKREDIYRKINSRFIEMVENGAIDEVKNLLSMNPSPHLPAMKAHGVPEIIRYLKGEITLDEAIQIAQTNTRHYAKRQYTWFKNQFPNSQVIDCANKLTEFGIF.

ATP is bound at residue 10 to 17 (GITASGKS). Residue 12–17 (TASGKS) participates in substrate binding. The interaction with substrate tRNA stretch occupies residues 36 to 39 (DSKQ).

This sequence belongs to the IPP transferase family. Monomer. Mg(2+) is required as a cofactor.

The catalysed reaction is adenosine(37) in tRNA + dimethylallyl diphosphate = N(6)-dimethylallyladenosine(37) in tRNA + diphosphate. Catalyzes the transfer of a dimethylallyl group onto the adenine at position 37 in tRNAs that read codons beginning with uridine, leading to the formation of N6-(dimethylallyl)adenosine (i(6)A). This chain is tRNA dimethylallyltransferase, found in Wolbachia pipientis subsp. Culex pipiens (strain wPip).